The following is a 449-amino-acid chain: Asparagine--tRNA ligase (449 aa).

The protein belongs to the class-II aminoacyl-tRNA synthetase family. Homodimer.

The protein resides in the cytoplasm. It carries out the reaction tRNA(Asn) + L-asparagine + ATP = L-asparaginyl-tRNA(Asn) + AMP + diphosphate + H(+). The sequence is that of Asparagine--tRNA ligase from Deinococcus geothermalis (strain DSM 11300 / CIP 105573 / AG-3a).